A 305-amino-acid polypeptide reads, in one-letter code: Phosphatidate cytidylyltransferase (305 aa).

A run of 8 helical transmembrane segments spans residues 27–47 (FLVI…VGLL), 67–87 (FPFS…ALTC), 96–116 (FPEH…IRLV), 124–144 (LGPI…SVPI), 150–170 (ILYG…AIFL), 202–222 (TVVG…LFYS), 232–252 (IAVP…GFFG), and 277–297 (MLDV…ILLI).

The protein belongs to the CDS family.

The protein localises to the cell membrane. The enzyme catalyses a 1,2-diacyl-sn-glycero-3-phosphate + CTP + H(+) = a CDP-1,2-diacyl-sn-glycerol + diphosphate. It participates in phospholipid metabolism; CDP-diacylglycerol biosynthesis; CDP-diacylglycerol from sn-glycerol 3-phosphate: step 3/3. In Chlamydia trachomatis serovar D (strain ATCC VR-885 / DSM 19411 / UW-3/Cx), this protein is Phosphatidate cytidylyltransferase (cdsA).